A 959-amino-acid polypeptide reads, in one-letter code: Translation initiation factor IF-2 (959 aa).

A compositionally biased stretch (basic and acidic residues) spans 1–10 (MSDKTNDDKT). The segment at 1–374 (MSDKTNDDKT…SQMQETREKI (374 aa)) is disordered. The segment covering 27 to 37 (EQSTVRQNFSH) has biased composition (polar residues). 2 stretches are compositionally biased toward low complexity: residues 63–118 (AAAA…VTKP) and 128–138 (QRPGGQQAQRP). 2 stretches are compositionally biased toward basic and acidic residues: residues 154–225 (SEMD…EAAK) and 232–241 (ARSERRDDAR). Residues 246-284 (GARPQQAGRPQGGRPQPAGRPQQGSPRPAPIIADAAPIA) show a composition bias toward low complexity. Positions 318-333 (PEVRAPKVVKGEDDRR) are enriched in basic and acidic residues. Residues 457 to 626 (SRPPVVTIMG…LLQAEMLDLK (170 aa)) enclose the tr-type G domain. A G1 region spans residues 466–473 (GHVDHGKT). 466–473 (GHVDHGKT) contacts GTP. The tract at residues 491–495 (GITQH) is G2. The segment at 512–515 (DTPG) is G3. GTP is bound by residues 512–516 (DTPGH) and 566–569 (NKID). The segment at 566-569 (NKID) is G4. The G5 stretch occupies residues 602 to 604 (SAK).

Belongs to the TRAFAC class translation factor GTPase superfamily. Classic translation factor GTPase family. IF-2 subfamily.

It localises to the cytoplasm. One of the essential components for the initiation of protein synthesis. Protects formylmethionyl-tRNA from spontaneous hydrolysis and promotes its binding to the 30S ribosomal subunits. Also involved in the hydrolysis of GTP during the formation of the 70S ribosomal complex. The protein is Translation initiation factor IF-2 of Brucella suis biovar 1 (strain 1330).